The primary structure comprises 680 residues: Dihydroxyacetone phosphate acyltransferase (680 aa).

Residues Ser12 and Ser17 each carry the phosphoserine modification. Positions His162–Asp167 match the HXXXXD motif motif. Lys643 carries the post-translational modification N6-acetyllysine. Residues Ala678–Leu680 carry the Microbody targeting signal motif.

This sequence belongs to the GPAT/DAPAT family. In terms of assembly, part of a heterotrimeric complex composed of GNPAT, AGPS and a modified form of GNPAT.

The protein resides in the peroxisome membrane. It catalyses the reaction dihydroxyacetone phosphate + an acyl-CoA = a 1-acylglycerone 3-phosphate + CoA. It carries out the reaction dihydroxyacetone phosphate + hexadecanoyl-CoA = 1-hexadecanoylglycerone 3-phosphate + CoA. The protein operates within membrane lipid metabolism; glycerophospholipid metabolism. Functionally, dihydroxyacetonephosphate acyltransferase catalyzing the first step in the biosynthesis of plasmalogens, a subset of phospholipids that differ from other glycerolipids by having an alkyl chain attached through a vinyl ether linkage at the sn-1 position of the glycerol backbone, and which unique physical properties have an impact on various aspects of cell signaling and membrane biology. The protein is Dihydroxyacetone phosphate acyltransferase of Bos taurus (Bovine).